We begin with the raw amino-acid sequence, 276 residues long: ARL14 effector protein (276 aa).

The disordered stretch occupies residues 159-183; it reads QTEFAPESGKREKRKLTKNASASSD. A Glycyl lysine isopeptide (Lys-Gly) (interchain with G-Cter in SUMO2) cross-link involves residue Lys-176. Phosphoserine is present on residues Ser-182 and Ser-266.

Interacts with ARL14 and MYO1E.

Its subcellular location is the cytoplasm. In terms of biological role, through its interaction with ARL14 and MYO1E, may connect MHC class II-containing cytoplasmic vesicles to the actin network and hence controls the movement of these vesicles along the actin cytoskeleton in dendritic cells. This is ARL14 effector protein (Arl14ep) from Rattus norvegicus (Rat).